A 262-amino-acid polypeptide reads, in one-letter code: MQYEIVSAGENVGDEPERERPVAQAAAAPGIPRPAALPAAGAARRGRDLPRERLLARGPAALSDAELVALLLGSGLPGHDVFALAHTLLTRFGSLRALLDAAPDDFKGLRGIGPARTAILVAVVELARRALAEKARERPLVDSPGAVDDYLRLLIGTRPREVFVCLFLDARHRLVQTEETAHGSLTRMAVYPREIVRRALALNAAALIVAHNHPSGAVRPSAADRHLTRVLRDALALVDVQLIDHFVVGANDTFSFAQAGWI.

Residues 1-45 (MQYEIVSAGENVGDEPERERPVAQAAAAPGIPRPAALPAAGAARR) are disordered. Low complexity predominate over residues 22–43 (VAQAAAAPGIPRPAALPAAGAA). In terms of domain architecture, MPN spans 140 to 262 (LVDSPGAVDD…TFSFAQAGWI (123 aa)). Residues His211, His213, and Asp224 each contribute to the Zn(2+) site. The JAMM motif motif lies at 211–224 (HNHPSGAVRPSAAD).

The protein belongs to the UPF0758 family.

This is UPF0758 protein BTH_I0781 from Burkholderia thailandensis (strain ATCC 700388 / DSM 13276 / CCUG 48851 / CIP 106301 / E264).